The following is a 473-amino-acid chain: Myocyte-specific enhancer factor 2C (473 aa).

The MADS-box domain occupies 1–61; the sequence is MGRKKIQITR…NKLFQYASTD (61 aa). Lys4 is subject to N6-acetyllysine. Residues 58 to 86 constitute a DNA-binding region (mef2-type); the sequence is ASTDMDKVLLKYTEYNEPHESRTNSDIVE. At Ser59 the chain carries Phosphoserine; by CK2. The tract at residues 91 to 116 is disordered; that stretch reads KGLNGCDSPDPDADDSVGHSPESEDK. 3 positions are modified to phosphoserine: Ser98, Ser106, and Ser110. Lys116 and Lys119 each carry N6-acetyllysine. The disordered stretch occupies residues 180–206; it reads NSMSPGVTHRPPSAGNTGGLMGGDLTS. Phosphoserine occurs at positions 222 and 228. Residues Lys234 and Lys239 each carry the N6-acetyllysine modification. Ser240 is subject to Phosphoserine. 2 positions are modified to N6-acetyllysine: Lys252 and Lys264. The tract at residues 271 to 278 is beta domain; that stretch reads SEDVDLLL. Phosphothreonine; by MAPK14 is present on residues Thr293 and Thr300. A transcription repressor region spans residues 368–399; sequence ACTSTHLSQSSNLSLPSTQSLNIKSEPVSPPR. Polar residues predominate over residues 375 to 390; the sequence is SQSSNLSLPSTQSLNI. The segment at 375–473 is disordered; it reads SQSSNLSLPS…RMRLSEGWAT (99 aa). Lys391 participates in a covalent cross-link: Glycyl lysine isopeptide (Lys-Gly) (interchain with G-Cter in SUMO). Ser396 carries the post-translational modification Phosphoserine; by CDK5. Residue Ser419 is modified to Phosphoserine; by MAPK7. The segment covering 419–432 has biased composition (low complexity); the sequence is SPVDSLSSCSSSYD. Positions 433–443 are enriched in basic and acidic residues; the sequence is GSDREDHRNEF. Ser445 is modified (phosphoserine).

It belongs to the MEF2 family. Forms a complex with class II HDACs in undifferentiating cells. On myogenic differentiation, HDACs are released into the cytoplasm allowing MEF2s to interact with other proteins for activation. Interacts with EP300 in differentiating cells; the interaction acetylates MEF2C leading to increased DNA binding and activation. Interacts with HDAC7 and CARM1. Interacts with HDAC4 and HDAC9; the interaction with HDACs represses transcriptional activity. Interacts with LPIN1. Interacts with MYOCD. Interacts with AKAP13. Interacts with FOXK1; the interaction inhibits MEF2C transactivation activity. Interacts (via N-terminus) with HABP4; this interaction decreases DNA-binding activity of MEF2C in myocardial cells in response to mechanical stress. Interacts with JPH2; interaction specifically takes place with the Junctophilin-2 N-terminal fragment cleavage product of JPH2. Interacts (via MADS box) with SOX18. Interacts with PHF7; the interaction promotes MEF2C binding to its transcription targets. Post-translationally, phosphorylated on Ser-59; which enhances DNA binding activity. Phosphorylated on Ser-396; which is required for Lys-391 sumoylation and inhibits transcriptional activity. In terms of processing, acetylated by p300 on several sites in diffentiating myocytes. Acetylation on Lys-4 increases DNA binding and transactivation. Sumoylated on Lys-391 with SUMO2 but not SUMO1; which represses transcriptional activity. Post-translationally, proteolytically cleaved in cerebellar granule neurons on several sites by caspase 3 and caspase 7 following neurotoxicity. Preferentially cleaves the CDK5-mediated hyperphosphorylated form which leads to neuron apoptosis and transcriptional inactivation. As to expression, expressed in the heart. Expressed in cardiac myocytes (at protein level).

It localises to the nucleus. It is found in the cytoplasm. The protein resides in the sarcoplasm. In terms of biological role, transcription activator which binds specifically to the MEF2 element present in the regulatory regions of many muscle-specific genes. Controls cardiac morphogenesis and myogenesis, and is also involved in vascular development. Enhances transcriptional activation mediated by SOX18. Plays an essential role in hippocampal-dependent learning and memory by suppressing the number of excitatory synapses and thus regulating basal and evoked synaptic transmission. Crucial for normal neuronal development, distribution, and electrical activity in the neocortex. Necessary for proper development of megakaryocytes and platelets and for bone marrow B-lymphopoiesis. Required for B-cell survival and proliferation in response to BCR stimulation, efficient IgG1 antibody responses to T-cell-dependent antigens and for normal induction of germinal center B-cells. May also be involved in neurogenesis and in the development of cortical architecture. The sequence is that of Myocyte-specific enhancer factor 2C from Rattus norvegicus (Rat).